Consider the following 181-residue polypeptide: Probable inosine/xanthosine triphosphatase (181 aa).

Asp65 contributes to the Mg(2+) binding site.

This sequence belongs to the YjjX NTPase family. In terms of assembly, homodimer. It depends on Mg(2+) as a cofactor. Requires Mn(2+) as cofactor.

The catalysed reaction is XTP + H2O = XDP + phosphate + H(+). It carries out the reaction ITP + H2O = IDP + phosphate + H(+). Phosphatase that hydrolyzes non-canonical purine nucleotides such as XTP and ITP to their respective diphosphate derivatives. Probably excludes non-canonical purines from DNA/RNA precursor pool, thus preventing their incorporation into DNA/RNA and avoiding chromosomal lesions. This chain is Probable inosine/xanthosine triphosphatase, found in Caldivirga maquilingensis (strain ATCC 700844 / DSM 13496 / JCM 10307 / IC-167).